The following is a 95-amino-acid chain: Antitoxin VapB41 (95 aa).

Functionally, antitoxin component of a type II toxin-antitoxin (TA) system. This Mycobacterium tuberculosis (strain CDC 1551 / Oshkosh) protein is Antitoxin VapB41 (vapB41).